Here is a 308-residue protein sequence, read N- to C-terminus: MDILPYLTKIILLSSIGITIASIIVETNLISKIKKITKPICLISNLPEECVVSLLGNFINPTVGKSMLSGFYKENKVNEKEVIVTTIISPLPTILGESVFRVQLPLAVVILGYKLGLIYVSLNVISGFLQALIGILYANIFFERRQINIDNNNNEKIVFNREVIIKGFKKSLKILKKVIPMIVIFTLLINFLIKLGLMDVVKGLFSPIFRILDLPGEAITVLIANLAHFSAGYTTVDILIKNGVLNEKQALIVLLIGNIISVTMIYLKHSIGTYISLFGRFGLKLAVINYTISVMIKILLILLLIAFF.

7 consecutive transmembrane segments (helical) span residues 10–30, 91–111, 115–135, 178–198, 219–239, 251–271, and 288–308; these read IILL…TNLI, LPTI…VVIL, LGLI…LIGI, VIPM…LGLM, ITVL…VDIL, LIVL…KHSI, and INYT…IAFF.

The protein to M.jannaschii MJ0871, MJ1556 and MJ1589.

It is found in the cell membrane. This is an uncharacterized protein from Methanocaldococcus jannaschii (strain ATCC 43067 / DSM 2661 / JAL-1 / JCM 10045 / NBRC 100440) (Methanococcus jannaschii).